Consider the following 615-residue polypeptide: Elongation factor 4 (615 aa).

The tr-type G domain occupies 14 to 200 (SKIRNFCIIA…KVAELIPAPT (187 aa)). Residues 26-31 (DHGKST) and 147-150 (NKID) each bind GTP.

It belongs to the TRAFAC class translation factor GTPase superfamily. Classic translation factor GTPase family. LepA subfamily.

The protein resides in the cell membrane. The enzyme catalyses GTP + H2O = GDP + phosphate + H(+). In terms of biological role, required for accurate and efficient protein synthesis under certain stress conditions. May act as a fidelity factor of the translation reaction, by catalyzing a one-codon backward translocation of tRNAs on improperly translocated ribosomes. Back-translocation proceeds from a post-translocation (POST) complex to a pre-translocation (PRE) complex, thus giving elongation factor G a second chance to translocate the tRNAs correctly. Binds to ribosomes in a GTP-dependent manner. This is Elongation factor 4 from Corynebacterium aurimucosum (strain ATCC 700975 / DSM 44827 / CIP 107346 / CN-1) (Corynebacterium nigricans).